The following is a 215-amino-acid chain: Probable phosphoglycerate mutase GpmB (215 aa).

Residues 8-15 (RHGETLWN), 21-22 (QG), R58, 82-85 (ELNM), and 151-152 (GM) each bind substrate. Residue H9 is the Tele-phosphohistidine intermediate of the active site. Residue E82 is the Proton donor/acceptor of the active site.

Belongs to the phosphoglycerate mutase family. GpmB subfamily.

The catalysed reaction is (2R)-2-phosphoglycerate = (2R)-3-phosphoglycerate. Its pathway is carbohydrate degradation; glycolysis; pyruvate from D-glyceraldehyde 3-phosphate: step 3/5. The polypeptide is Probable phosphoglycerate mutase GpmB (Yersinia pseudotuberculosis serotype O:1b (strain IP 31758)).